The chain runs to 224 residues: UPF0758 protein PSPA7_6095 (224 aa).

The MPN domain occupies Val102–Met224. Zn(2+)-binding residues include His173, His175, and Asp186. A JAMM motif motif is present at residues His173–Asp186.

It belongs to the UPF0758 family.

This Pseudomonas paraeruginosa (strain DSM 24068 / PA7) (Pseudomonas aeruginosa (strain PA7)) protein is UPF0758 protein PSPA7_6095.